A 158-amino-acid chain; its full sequence is 2-C-methyl-D-erythritol 2,4-cyclodiphosphate synthase (158 aa).

The a divalent metal cation site is built by aspartate 9 and histidine 11. 4-CDP-2-C-methyl-D-erythritol 2-phosphate contacts are provided by residues aspartate 9–histidine 11 and histidine 35–serine 36. Position 43 (histidine 43) interacts with a divalent metal cation. Residues aspartate 57–glycine 59, phenylalanine 62–aspartate 66, alanine 101–alanine 107, threonine 133–glutamate 136, phenylalanine 140, and arginine 143 each bind 4-CDP-2-C-methyl-D-erythritol 2-phosphate.

The protein belongs to the IspF family. Homotrimer. It depends on a divalent metal cation as a cofactor.

It carries out the reaction 4-CDP-2-C-methyl-D-erythritol 2-phosphate = 2-C-methyl-D-erythritol 2,4-cyclic diphosphate + CMP. Its pathway is isoprenoid biosynthesis; isopentenyl diphosphate biosynthesis via DXP pathway; isopentenyl diphosphate from 1-deoxy-D-xylulose 5-phosphate: step 4/6. In terms of biological role, involved in the biosynthesis of isopentenyl diphosphate (IPP) and dimethylallyl diphosphate (DMAPP), two major building blocks of isoprenoid compounds. Catalyzes the conversion of 4-diphosphocytidyl-2-C-methyl-D-erythritol 2-phosphate (CDP-ME2P) to 2-C-methyl-D-erythritol 2,4-cyclodiphosphate (ME-CPP) with a corresponding release of cytidine 5-monophosphate (CMP). This Bacillus licheniformis (strain ATCC 14580 / DSM 13 / JCM 2505 / CCUG 7422 / NBRC 12200 / NCIMB 9375 / NCTC 10341 / NRRL NRS-1264 / Gibson 46) protein is 2-C-methyl-D-erythritol 2,4-cyclodiphosphate synthase.